The chain runs to 266 residues: Protein-ADP-ribose hydrolase (266 aa).

The 192-residue stretch at 74 to 265 (TDLKDLKPIK…LYKEAFNRDA (192 aa)) folds into the Macro domain. ADP-D-ribose is bound by residues Asp93, Ile94, and Asn107. Zn(2+) contacts are provided by Cys113, His118, and Cys120. ADP-D-ribose-binding residues include Cys120, Ile121, Asp122, Ser212, Thr213, Gly214, and Phe216.

It belongs to the MacroD-type family. Zn-Macro subfamily. The cofactor is Zn(2+).

It catalyses the reaction 4-O-(ADP-D-ribosyl)-L-aspartyl-[protein] + H2O = L-aspartyl-[protein] + ADP-D-ribose + H(+). Functionally, ADP-ribosylhydrolase that specifically reverses the SirTM-mediated mono-ADP-ribosylation at an asparatate residue of GcvH-L, by releasing ADP-ribose from the target protein. May play a role in the regulation of the response to host-induced oxidative stress. In Staphylococcus aureus (strain MRSA252), this protein is Protein-ADP-ribose hydrolase.